Consider the following 162-residue polypeptide: HTH-type transcriptional regulator IscR (162 aa).

The region spanning 2 to 131 is the HTH rrf2-type domain; it reads RLTSKGRYAV…NNITLGELVN (130 aa). The segment at residues 28–51 is a DNA-binding region (H-T-H motif); that stretch reads LADISERQGISLSYLEQLFSRLRK. Residues Cys92, Cys98, and Cys104 each coordinate [2Fe-2S] cluster.

[2Fe-2S] cluster serves as cofactor.

In terms of biological role, regulates the transcription of several operons and genes involved in the biogenesis of Fe-S clusters and Fe-S-containing proteins. The protein is HTH-type transcriptional regulator IscR of Shigella sonnei (strain Ss046).